The chain runs to 327 residues: GMP reductase (327 aa).

The active-site Thioimidate intermediate is the Cys176. 205 to 228 is a binding site for NADP(+); sequence IIADGGIRTHGDIVKSIRFGATMV.

Belongs to the IMPDH/GMPR family. GuaC type 2 subfamily.

It carries out the reaction IMP + NH4(+) + NADP(+) = GMP + NADPH + 2 H(+). Functionally, catalyzes the irreversible NADPH-dependent deamination of GMP to IMP. It functions in the conversion of nucleobase, nucleoside and nucleotide derivatives of G to A nucleotides, and in maintaining the intracellular balance of A and G nucleotides. This chain is GMP reductase, found in Helicobacter pylori (strain ATCC 700392 / 26695) (Campylobacter pylori).